The primary structure comprises 220 residues: Adapter protein MecA (220 aa).

The protein belongs to the MecA family. As to quaternary structure, homodimer.

In terms of biological role, enables the recognition and targeting of unfolded and aggregated proteins to the ClpC protease or to other proteins involved in proteolysis. The sequence is that of Adapter protein MecA from Macrococcus caseolyticus (strain JCSC5402) (Macrococcoides caseolyticum).